An 885-amino-acid chain; its full sequence is Alanine--tRNA ligase (885 aa).

The Zn(2+) site is built by H571, H575, C674, and H678.

This sequence belongs to the class-II aminoacyl-tRNA synthetase family. Zn(2+) is required as a cofactor.

Its subcellular location is the cytoplasm. It catalyses the reaction tRNA(Ala) + L-alanine + ATP = L-alanyl-tRNA(Ala) + AMP + diphosphate. In terms of biological role, catalyzes the attachment of alanine to tRNA(Ala) in a two-step reaction: alanine is first activated by ATP to form Ala-AMP and then transferred to the acceptor end of tRNA(Ala). Also edits incorrectly charged Ser-tRNA(Ala) and Gly-tRNA(Ala) via its editing domain. The sequence is that of Alanine--tRNA ligase from Clavibacter michiganensis subsp. michiganensis (strain NCPPB 382).